The primary structure comprises 418 residues: MKDQIIQKLHDVVRASRELVTLSDEAINRLLLDLADQIPNHQTAILEANQRDIERMDSANPMVDRLLLNEARLQAIAADIRNVASLPTPLDAVLEKRTLPNGLELKKVSVPMGVIGIIYEARPNVTFDVFALCLKSGNATVLKGGSDAMYSNIAIVELIHSVLQQHGINPDTLYLLPAEREAAAVMLGAVGYIDMIIPRGSQKLIDFVRDNSRVPVIETGAGIVHTYFDVSGDLELGKQVIFNAKTRRPSVCNALDTLVIHRDRLGDLSYLVEPLQSRQVELFVDDAAYQELHGFYPKALLHQAKPEHFGTEFLSLKMSVKTVANLDEALEHIATYSSRHSEAIIATDAATVATFMKRVDAAVVYANTSTAFTDGAQFGLGAEIGISTQKLHARGPMALREMTTYKWLIVGNGQVRPA.

This sequence belongs to the gamma-glutamyl phosphate reductase family.

The protein resides in the cytoplasm. It catalyses the reaction L-glutamate 5-semialdehyde + phosphate + NADP(+) = L-glutamyl 5-phosphate + NADPH + H(+). It participates in amino-acid biosynthesis; L-proline biosynthesis; L-glutamate 5-semialdehyde from L-glutamate: step 2/2. Functionally, catalyzes the NADPH-dependent reduction of L-glutamate 5-phosphate into L-glutamate 5-semialdehyde and phosphate. The product spontaneously undergoes cyclization to form 1-pyrroline-5-carboxylate. The polypeptide is Gamma-glutamyl phosphate reductase (Chlorobium chlorochromatii (strain CaD3)).